The primary structure comprises 318 residues: Fibronectin type III domain-containing protein 11 (318 aa).

A Fibronectin type-III domain is found at 210–307; it reads VVFDRKASAA…DSLTLHTKPE (98 aa).

In Homo sapiens (Human), this protein is Fibronectin type III domain-containing protein 11 (FNDC11).